Consider the following 326-residue polypeptide: Triacylglycerol lipase 2 (326 aa).

Positions 142–146 (AHSMG) match the (A/G)XSXG lipase motif motif.

As to quaternary structure, interacts with MIA40; forms mixed disulfide intermediates with MIA40.

The protein localises to the mitochondrion. The protein resides in the mitochondrion intermembrane space. It carries out the reaction a triacylglycerol + H2O = a diacylglycerol + a fatty acid + H(+). The enzyme catalyses 1,2,3-tri-(9Z-octadecenoyl)-glycerol + H2O = di-(9Z)-octadecenoylglycerol + (9Z)-octadecenoate + H(+). The catalysed reaction is 1,2,3-tributanoylglycerol + H2O = dibutanoylglycerol + butanoate + H(+). It catalyses the reaction 1,2,3-trioctanoylglycerol + H2O = dioctanoylglycerol + octanoate + H(+). It carries out the reaction di-(9Z)-octadecenoylglycerol + H2O = (9Z-octadecenoyl)-glycerol + (9Z)-octadecenoate + H(+). The enzyme catalyses dioctanoylglycerol + H2O = octanoylglycerol + octanoate + H(+). In terms of biological role, mitochondrial triacylglycerol (TAG) lipase with activity toward long-chain diacylglycerols (DAGs) and triacylglycerols (TAGs). Involved in mitochondrial lipid metabolism. This is Triacylglycerol lipase 2 (TGL2) from Saccharomyces cerevisiae (strain ATCC 204508 / S288c) (Baker's yeast).